We begin with the raw amino-acid sequence, 372 residues long: Cyclin-dependent kinase 9 (372 aa).

In terms of domain architecture, Protein kinase spans Y19–F315. ATP is bound at residue I25 to V33. K44 carries the post-translational modification N6-acetyllysine; by EP300/CBP, PCAF/KAT2B and GCN5/KAT2A. Residues K48 and D104 to C106 contribute to the ATP site. Position 48 is an N6-acetyllysine; by PCAF/KAT2B and GCN5/KAT2A (K48). The Proton acceptor role is filled by D149. Positions A166 to T191 are T-loop. D167 is an ATP binding site. Position 175 is a phosphoserine (S175). At T186 the chain carries Phosphothreonine; by CaMK1D. The disordered stretch occupies residues R343–F372. S347 is subject to Phosphoserine; by CDK9 and PKA. Positions S347–T366 are enriched in polar residues. Residue T350 is modified to Phosphothreonine; by CDK9. S353 is modified (phosphoserine; by CDK9). T354 bears the Phosphothreonine; by CDK9 mark. A Phosphoserine; by CDK9 modification is found at S357. 2 positions are modified to phosphothreonine; by CDK9: T362 and T363.

This sequence belongs to the protein kinase superfamily. CMGC Ser/Thr protein kinase family. CDC2/CDKX subfamily. Component of the super elongation complex (SEC), at least composed of EAF1, EAF2, CDK9, MLLT3/AF9, AFF (AFF1 or AFF4), the P-TEFb complex and ELL (ELL, ELL2 or ELL3). Associates with CCNT1/cyclin-T1, CCNT2/cyclin-T2 (isoform A and isoform B) or CCNK/cyclin-K to form active P-TEFb. P-TEFb forms a complex with AFF4/AF5Q31 and is part of the super elongation complex (SEC). Component of a complex which is composed of at least 5 members: HTATSF1/Tat-SF1, P-TEFb complex, RNA pol II, SUPT5H, and NCL/nucleolin. Associates with UBR5 and forms a transcription regulatory complex composed of CDK9, RNAP II, UBR5 and TFIIS/TCEA1 that can stimulate target gene transcription (e.g. gamma fibrinogen/FGG) by recruiting their promoters. Component of the 7SK snRNP inactive complex which is composed of at least 8 members: P-TEFb (composed of CDK9 and CCNT1/cyclin-T1), HEXIM1, HEXIM2, LARP7, BCDIN3, SART3 proteins and 7SK and U6 snRNAs. This inactive 7SK snRNP complex can also interact with NCOR1 and HDAC3, probably to regulate CDK9 acetylation. Release of P-TEFb from P-TEFb/7SK snRNP complex requires both PP2B to transduce calcium Ca(2+) signaling in response to stimuli (e.g. UV or hexamethylene bisacetamide (HMBA)), and PPP1CA to dephosphorylate Thr-186. This released P-TEFb remains inactive in the pre-initiation complex with BRD4 until new Thr-186 phosphorylation occurs after the synthesis of a short RNA. Interacts with BRD4; to target chromatin binding. Interacts with JMJD6. Interacts with activated nuclear STAT3 and RELA/p65. Binds to AR and MYOD1. Forms a complex composed of CDK9, CCNT1/cyclin-T1, EP300 and GATA4 that stimulates hypertrophy in cardiomyocytes. The large PER complex involved in the repression of transcriptional termination is composed of at least PER2, CDK9, DDX5, DHX9, NCBP1 and POLR2A. Interacts with HSF1. Interacts with TBX21. Interacts with WDR43. Interacts with ZMYND8; the association appears to occur between homodimeric ZMYND8 and the activated form of the P-TEFb complex. Post-translationally, autophosphorylation at Thr-186, Ser-347, Thr-350, Ser-353, Thr-354 and Ser-357 triggers kinase activity by promoting cyclin and substrate binding upon conformational changes. Thr-186 phosphorylation requires the calcium Ca(2+) signaling pathway, including CaMK1D and calmodulin. This inhibition is relieved by Thr-29 dephosphorylation. Phosphorylation at Ser-175 inhibits kinase activity. Can be phosphorylated on either Thr-362 or Thr-363 but not on both simultaneously. In terms of processing, dephosphorylation of Thr-186 by PPM1A and PPM1B blocks CDK9 activity and may lead to CDK9 proteasomal degradation. However, PPP1CA-mediated Thr-186 dephosphorylation is required to release P-TEFb from its inactive P-TEFb/7SK snRNP complex. Dephosphorylated at Ser-347 by the PNUTS-PP1 complex during RNA polymerase II transcription pause-release. Dephosphorylation of C-terminus Thr and Ser residues by protein phosphatase-1 (PP1) triggers CDK9 activity. N6-acetylation of Lys-44 promotes kinase activity, whereas acetylation of both Lys-44 and Lys-48 mediated by PCAF/KAT2B and GCN5/KAT2A reduces kinase activity. The acetylated form associates with PML bodies in the nuclear matrix and with the transcriptionally silent HIV-1 genome; deacetylated upon transcription stimulation. Deacetylated by SIRT7, promoting the kinase activity and subsequent 'Ser-2' phosphorylation of the C-terminal domain (CTD) of RNA polymerase II. Post-translationally, polyubiquitinated and thus activated by UBR5. This ubiquitination is promoted by TFIIS/TCEA1 and favors 'Ser-2' phosphorylation of RPB1/POLR2A CTD.

It localises to the nucleus. The protein resides in the cytoplasm. It is found in the PML body. The catalysed reaction is L-seryl-[protein] + ATP = O-phospho-L-seryl-[protein] + ADP + H(+). The enzyme catalyses L-threonyl-[protein] + ATP = O-phospho-L-threonyl-[protein] + ADP + H(+). It catalyses the reaction [DNA-directed RNA polymerase] + ATP = phospho-[DNA-directed RNA polymerase] + ADP + H(+). Activation by Thr-186 phosphorylation is calcium Ca(2+) signaling pathway-dependent; actively inactivated by dephosphorylation mediated by PPP1CA, PPM1A and PPM1B. Reversibly repressed by acetylation at Lys-44 and Lys-48. Functionally, protein kinase involved in the regulation of transcription. Member of the cyclin-dependent kinase pair (CDK9/cyclin-T) complex, also called positive transcription elongation factor b (P-TEFb), which facilitates the transition from abortive to productive elongation by phosphorylating the CTD (C-terminal domain) of the large subunit of RNA polymerase II (RNAP II) POLR2A, SUPT5H and RDBP. This complex is inactive when in the 7SK snRNP complex form. Phosphorylates EP300, MYOD1, RPB1/POLR2A and AR and the negative elongation factors DSIF and NELFE. Regulates cytokine inducible transcription networks by facilitating promoter recognition of target transcription factors (e.g. TNF-inducible RELA/p65 activation and IL-6-inducible STAT3 signaling). Promotes RNA synthesis in genetic programs for cell growth, differentiation and viral pathogenesis. P-TEFb is also involved in cotranscriptional histone modification, mRNA processing and mRNA export. Modulates a complex network of chromatin modifications including histone H2B monoubiquitination (H2Bub1), H3 lysine 4 trimethylation (H3K4me3) and H3K36me3; integrates phosphorylation during transcription with chromatin modifications to control co-transcriptional histone mRNA processing. The CDK9/cyclin-K complex has also a kinase activity towards CTD of RNAP II and can substitute for CDK9/cyclin-T P-TEFb in vitro. Replication stress response protein; the CDK9/cyclin-K complex is required for genome integrity maintenance, by promoting cell cycle recovery from replication arrest and limiting single-stranded DNA amount in response to replication stress, thus reducing the breakdown of stalled replication forks and avoiding DNA damage. In addition, probable function in DNA repair of isoform 2 via interaction with KU70/XRCC6. Promotes cardiac myocyte enlargement. RPB1/POLR2A phosphorylation on 'Ser-2' in CTD activates transcription. AR phosphorylation modulates AR transcription factor promoter selectivity and cell growth. DSIF and NELF phosphorylation promotes transcription by inhibiting their negative effect. The phosphorylation of MYOD1 enhances its transcriptional activity and thus promotes muscle differentiation. Catalyzes phosphorylation of KAT5, promoting KAT5 recruitment to chromatin and histone acetyltransferase activity. The sequence is that of Cyclin-dependent kinase 9 (CDK9) from Bos taurus (Bovine).